Here is a 407-residue protein sequence, read N- to C-terminus: Phosphopentomutase (407 aa).

Positions 10, 306, 311, 347, 348, and 359 each coordinate Mn(2+).

The protein belongs to the phosphopentomutase family. Mn(2+) serves as cofactor.

It localises to the cytoplasm. It catalyses the reaction 2-deoxy-alpha-D-ribose 1-phosphate = 2-deoxy-D-ribose 5-phosphate. The catalysed reaction is alpha-D-ribose 1-phosphate = D-ribose 5-phosphate. The protein operates within carbohydrate degradation; 2-deoxy-D-ribose 1-phosphate degradation; D-glyceraldehyde 3-phosphate and acetaldehyde from 2-deoxy-alpha-D-ribose 1-phosphate: step 1/2. Isomerase that catalyzes the conversion of deoxy-ribose 1-phosphate (dRib-1-P) and ribose 1-phosphate (Rib-1-P) to deoxy-ribose 5-phosphate (dRib-5-P) and ribose 5-phosphate (Rib-5-P), respectively. This Pectobacterium atrosepticum (strain SCRI 1043 / ATCC BAA-672) (Erwinia carotovora subsp. atroseptica) protein is Phosphopentomutase.